The sequence spans 167 residues: NAD(P)H-quinone oxidoreductase subunit I, chloroplastic (167 aa).

4Fe-4S ferredoxin-type domains follow at residues glycine 55 to lysine 84 and leucine 95 to glutamate 124. [4Fe-4S] cluster-binding residues include cysteine 64, cysteine 67, cysteine 70, cysteine 74, cysteine 104, cysteine 107, cysteine 110, and cysteine 114.

It belongs to the complex I 23 kDa subunit family. In terms of assembly, NDH is composed of at least 16 different subunits, 5 of which are encoded in the nucleus. [4Fe-4S] cluster is required as a cofactor.

It is found in the plastid. The protein resides in the chloroplast thylakoid membrane. The enzyme catalyses a plastoquinone + NADH + (n+1) H(+)(in) = a plastoquinol + NAD(+) + n H(+)(out). It catalyses the reaction a plastoquinone + NADPH + (n+1) H(+)(in) = a plastoquinol + NADP(+) + n H(+)(out). Its function is as follows. NDH shuttles electrons from NAD(P)H:plastoquinone, via FMN and iron-sulfur (Fe-S) centers, to quinones in the photosynthetic chain and possibly in a chloroplast respiratory chain. The immediate electron acceptor for the enzyme in this species is believed to be plastoquinone. Couples the redox reaction to proton translocation, and thus conserves the redox energy in a proton gradient. This Jasminum nudiflorum (Winter jasmine) protein is NAD(P)H-quinone oxidoreductase subunit I, chloroplastic.